The chain runs to 677 residues: DNA ligase (677 aa).

NAD(+) contacts are provided by residues 35–39 (DAEFD), 85–86 (SL), and E110. K112 serves as the catalytic N6-AMP-lysine intermediate. NAD(+) is bound by residues R133 and E173. Positions 189-210 (QKEGGKPFANPRNAAAGSLRQK) are disordered. Residues K289 and K313 each contribute to the NAD(+) site. Zn(2+) contacts are provided by C407, C410, C426, and C432. The region spanning 596–677 (IPDQVLEGLT…FKQLLANGTV (82 aa)) is the BRCT domain.

The protein belongs to the NAD-dependent DNA ligase family. LigA subfamily. The cofactor is Mg(2+). Mn(2+) serves as cofactor.

It carries out the reaction NAD(+) + (deoxyribonucleotide)n-3'-hydroxyl + 5'-phospho-(deoxyribonucleotide)m = (deoxyribonucleotide)n+m + AMP + beta-nicotinamide D-nucleotide.. DNA ligase that catalyzes the formation of phosphodiester linkages between 5'-phosphoryl and 3'-hydroxyl groups in double-stranded DNA using NAD as a coenzyme and as the energy source for the reaction. It is essential for DNA replication and repair of damaged DNA. This chain is DNA ligase, found in Corynebacterium diphtheriae (strain ATCC 700971 / NCTC 13129 / Biotype gravis).